The sequence spans 561 residues: Type 2 DNA topoisomerase 6 subunit B (561 aa).

Residues N46, D78, 99–100, 109–116, and K471 contribute to the ATP site; these read TK and GQQGIGIS.

Belongs to the TOP6B family. As to quaternary structure, homodimer. Heterotetramer of two Top6A and two Top6B chains.

It carries out the reaction ATP-dependent breakage, passage and rejoining of double-stranded DNA.. In terms of biological role, relaxes both positive and negative superturns and exhibits a strong decatenase activity. The chain is Type 2 DNA topoisomerase 6 subunit B from Thermococcus gammatolerans (strain DSM 15229 / JCM 11827 / EJ3).